The sequence spans 247 residues: 2,3-bisphosphoglycerate-dependent phosphoglycerate mutase (247 aa).

Substrate-binding positions include 8-15, 21-22, R60, 87-90, K98, 114-115, and 183-184; these read RHGESTWN, TG, ERHY, RR, and GN. H9 serves as the catalytic Tele-phosphohistidine intermediate. The active-site Proton donor/acceptor is the E87.

It belongs to the phosphoglycerate mutase family. BPG-dependent PGAM subfamily. In terms of assembly, homodimer.

It carries out the reaction (2R)-2-phosphoglycerate = (2R)-3-phosphoglycerate. Its pathway is carbohydrate degradation; glycolysis; pyruvate from D-glyceraldehyde 3-phosphate: step 3/5. Catalyzes the interconversion of 2-phosphoglycerate and 3-phosphoglycerate. The protein is 2,3-bisphosphoglycerate-dependent phosphoglycerate mutase of Leptothrix cholodnii (strain ATCC 51168 / LMG 8142 / SP-6) (Leptothrix discophora (strain SP-6)).